Reading from the N-terminus, the 531-residue chain is UDP-glucuronosyltransferase 1A3 (531 aa).

Residues 1–25 (MGIQGFLQKLSGLLLLLCALPWAEG) form the signal peptide. Asn116, Asn139, Asn293, and Asn431 each carry an N-linked (GlcNAc...) asparagine glycan. A helical transmembrane segment spans residues 489 to 505 (VIGFLLAIVLTVVFIVY).

It belongs to the UDP-glycosyltransferase family. Homodimers. Homooligomer. Interacts with UGT1A1, UGT1A4, UGT1A6, UGT1A7, UGT1A8, UGT1A9 and UGT1A10 to form heterodimers.

The protein localises to the endoplasmic reticulum membrane. The catalysed reaction is glucuronate acceptor + UDP-alpha-D-glucuronate = acceptor beta-D-glucuronoside + UDP + H(+). It catalyses the reaction 17beta-estradiol + UDP-alpha-D-glucuronate = 17beta-estradiol 3-O-(beta-D-glucuronate) + UDP + H(+). It carries out the reaction 17beta-estradiol + UDP-alpha-D-glucuronate = 17beta-estradiol 17-O-(beta-D-glucuronate) + UDP + H(+). The enzyme catalyses 17alpha-estradiol + UDP-alpha-D-glucuronate = 17alpha-estradiol 3-O-(beta-D-glucuronate) + UDP + H(+). The catalysed reaction is estrone + UDP-alpha-D-glucuronate = estrone 3-O-(beta-D-glucuronate) + UDP + H(+). It catalyses the reaction chenodeoxycholate + UDP-alpha-D-glucuronate = chenodeoxycholoyl-24-O-(beta-D-glucuronate) + UDP. It carries out the reaction deoxycholate + UDP-alpha-D-glucuronate = deoxycholoyl-24-O-(beta-D-glucuronate) + UDP. The enzyme catalyses lithocholate + UDP-alpha-D-glucuronate = lithocholoyl-24-O-(beta-D-glucuronate) + UDP. The catalysed reaction is hyodeoxycholate + UDP-alpha-D-glucuronate = hyodeoxycholoyl-24-O-(beta-D-glucuronate) + UDP. It catalyses the reaction hyocholate + UDP-alpha-D-glucuronate = hyocholoyl-24-O-(beta-D-glucuronate) + UDP. It carries out the reaction calcidiol + UDP-alpha-D-glucuronate = calcidiol 25-O-(beta-D-glucuronide) + UDP + H(+). The enzyme catalyses losartan + UDP-alpha-D-glucuronate = losartan-2-N-beta-D-glucuronide + UDP. The catalysed reaction is candesartan + UDP-alpha-D-glucuronate = candesartan-2-N-beta-D-glucuronide + UDP. It catalyses the reaction zolasartan + UDP-alpha-D-glucuronate = zolarsartan-2-N-beta-D-glucuronide + UDP. It carries out the reaction (E)-ferulate + UDP-alpha-D-glucuronate = (E)-4-O-(beta-D-glucuronosyl)-ferulate + UDP + H(+). The enzyme catalyses (E)-ferulate + UDP-alpha-D-glucuronate = (E)-ferulic acid beta-D-glucuronate ester + UDP. UDP-glucuronosyltransferase (UGT) that catalyzes phase II biotransformation reactions in which lipophilic substrates are conjugated with glucuronic acid to increase the metabolite's water solubility, thereby facilitating excretion into either the urine or bile. Essential for the elimination and detoxification of drugs, xenobiotics and endogenous compounds. Catalyzes the glucuronidation of endogenous estrogen hormones such as estradiol and estrone. Contributes to bile acid (BA) detoxification by catalyzing the glucuronidation of BA substrates, which are natural detergents for dietary lipids absorption. Involved in the glucuronidation of calcidiol, which is the major circulating form of vitamin D3, essential for the regulation of calcium and phosphate homeostasis. Involved in the glucuronidation of the phytochemical ferulic acid at the phenolic or the carboxylic acid group. Involved in the glucuronidation of the AGTR1 angiotensin receptor antagonists losartan, candesartan and zolarsartan, which can inhibit the effect of angiotensin II. The chain is UDP-glucuronosyltransferase 1A3 from Rattus norvegicus (Rat).